Here is a 142-residue protein sequence, read N- to C-terminus: Large ribosomal subunit protein uL13 (142 aa).

This sequence belongs to the universal ribosomal protein uL13 family. Part of the 50S ribosomal subunit.

Its function is as follows. This protein is one of the early assembly proteins of the 50S ribosomal subunit, although it is not seen to bind rRNA by itself. It is important during the early stages of 50S assembly. The sequence is that of Large ribosomal subunit protein uL13 from Shigella dysenteriae serotype 1 (strain Sd197).